The primary structure comprises 317 residues: Melanocyte-stimulating hormone receptor (317 aa).

Over 1 to 37 (MPMQGAQRRLLGSLNSTPTATPNLGLAANHTGAPCLE) the chain is Extracellular. A glycan (N-linked (GlcNAc...) asparagine) is linked at asparagine 29. A helical membrane pass occupies residues 38 to 63 (VSIPDGLFLSLGLVSLVENVLVVAAI). Topologically, residues 64-72 (AKNRNLHSP) are cytoplasmic. A helical membrane pass occupies residues 73–93 (MYCFICCLALSDLLVSGSNML). Over 94 to 118 (ETAVILLLEAGALATRASVVQQLQN) the chain is Extracellular. Residues 119-140 (TIDVLTCSSMLCSLCFLGAIAV) traverse the membrane as a helical segment. The Cytoplasmic segment spans residues 141 to 163 (DRYVSIFYALRYHSIVTLPRARR). Residues 164–183 (AIAAIWVASVLSSTLFIAYC) traverse the membrane as a helical segment. Residues 184–191 (DHAAVLLC) are Extracellular-facing. A helical membrane pass occupies residues 192 to 211 (LVVFFLAMLVLMAVLYVHML). The Cytoplasmic portion of the chain corresponds to 212 to 240 (ARACQHAQGITRLHKRQLPAHQGFGLRGA). The helical transmembrane segment at 241–266 (ATLTILLGIFFLCWGPFFLHLMLVVL) threads the bilayer. At 267 to 279 (CPQHLTCSCIFKN) the chain is on the extracellular side. Residues 280 to 300 (FKVFLTLIICNTIIDPLIYAF) traverse the membrane as a helical segment. The Cytoplasmic segment spans residues 301–317 (RSQELCRTLKEVLLCSW). Residue cysteine 315 is the site of S-palmitoyl cysteine attachment.

The protein belongs to the G-protein coupled receptor 1 family. Interacts with MGRN1, but does not undergo MGRN1-mediated ubiquitination; this interaction competes with GNAS-binding and thus inhibits agonist-induced cAMP production. Interacts with OPN3; the interaction results in a decrease in MC1R-mediated cAMP signaling and ultimately a decrease in melanin production in melanocytes.

It is found in the cell membrane. Its function is as follows. Receptor for MSH (alpha, beta and gamma) and ACTH. The activity of this receptor is mediated by G proteins which activate adenylate cyclase. Mediates melanogenesis, the production of eumelanin (black/brown) and phaeomelanin (red/yellow), via regulation of cAMP signaling in melanocytes. This chain is Melanocyte-stimulating hormone receptor (MC1R), found in Alouatta palliata (Mantled howler monkey).